Consider the following 377-residue polypeptide: O-phospho-L-seryl-tRNA:Cys-tRNA synthase (377 aa).

Residues 82–83 (AR), Asn-189, and 212–214 (SGH) contribute to the pyridoxal 5'-phosphate site. Lys-215 carries the N6-(pyridoxal phosphate)lysine modification.

It belongs to the SepCysS family. As to quaternary structure, homodimer. Interacts with SepRS. Pyridoxal 5'-phosphate serves as cofactor.

The enzyme catalyses O-phospho-L-seryl-tRNA(Cys) + hydrogen sulfide + H(+) = L-cysteinyl-tRNA(Cys) + phosphate. Converts O-phospho-L-seryl-tRNA(Cys) (Sep-tRNA(Cys)) to L-cysteinyl-tRNA(Cys) (Cys-tRNA(Cys)). The protein is O-phospho-L-seryl-tRNA:Cys-tRNA synthase of Methanocaldococcus jannaschii (strain ATCC 43067 / DSM 2661 / JAL-1 / JCM 10045 / NBRC 100440) (Methanococcus jannaschii).